The chain runs to 261 residues: MQDLAFHLLAFLFVAAFIAGFIDSIAGGGGMITIPAMLIAGIPPLQTLGTNKLQGLFGSGSATLSYARRGHVNLKEQLPMALMSAAGAVLGALLATIVPGDVLKAILPFLLIAIALYFGLKPNMGDVDQHSRVTPFVFTLTLVPLIGFYDGVFGPGTGSFFMLGFVTLAGFGVLKATAHTKFLNFGSNVGAFGVFLFFGAVLWKVGLLMGLGQFLGAQVGSRYAMAKGAKIIKPLLVIVSIALAIRLLADPTHPLRIWLGH.

The next 8 membrane-spanning stretches (helical) occupy residues 8–28 (LLAF…IAGG), 29–49 (GGMI…QTLG), 78–98 (LPMA…ATIV), 100–120 (GDVL…YFGL), 133–151 (VTPF…FYDG), 152–171 (VFGP…LAGF), 189–209 (VGAF…GLLM), and 231–251 (IIKP…LADP).

The protein belongs to the 4-toluene sulfonate uptake permease (TSUP) (TC 2.A.102) family.

It localises to the cell membrane. This is Probable membrane transporter protein ORF9 from Sinorhizobium sp.